Reading from the N-terminus, the 340-residue chain is Ferrochelatase (340 aa).

Histidine 189 and glutamate 292 together coordinate Fe cation.

Belongs to the ferrochelatase family.

The protein resides in the cytoplasm. The enzyme catalyses heme b + 2 H(+) = protoporphyrin IX + Fe(2+). It functions in the pathway porphyrin-containing compound metabolism; protoheme biosynthesis; protoheme from protoporphyrin-IX: step 1/1. Catalyzes the ferrous insertion into protoporphyrin IX. The chain is Ferrochelatase from Ectopseudomonas mendocina (strain ymp) (Pseudomonas mendocina).